A 307-amino-acid chain; its full sequence is Ribosomal RNA small subunit methyltransferase H (307 aa).

S-adenosyl-L-methionine contacts are provided by residues 33–35 (GGY), Asp-51, Phe-82, Asp-96, and Gln-103.

This sequence belongs to the methyltransferase superfamily. RsmH family.

The protein localises to the cytoplasm. The catalysed reaction is cytidine(1402) in 16S rRNA + S-adenosyl-L-methionine = N(4)-methylcytidine(1402) in 16S rRNA + S-adenosyl-L-homocysteine + H(+). Its function is as follows. Specifically methylates the N4 position of cytidine in position 1402 (C1402) of 16S rRNA. This chain is Ribosomal RNA small subunit methyltransferase H, found in Rickettsia rickettsii (strain Iowa).